We begin with the raw amino-acid sequence, 150 residues long: L-alanine exporter AlaE (150 aa).

The next 4 membrane-spanning stretches (helical) occupy residues 17-37 (FAMV…ISGM), 48-68 (LSIP…DFML), 86-106 (LVAY…VVGA), and 111-131 (IITA…FYGY).

This sequence belongs to the AlaE exporter family.

The protein resides in the cell inner membrane. Exports L-alanine. In Aliivibrio fischeri (strain ATCC 700601 / ES114) (Vibrio fischeri), this protein is L-alanine exporter AlaE.